The chain runs to 459 residues: Ribulose bisphosphate carboxylase large chain (459 aa).

An N6,N6,N6-trimethyllysine modification is found at lysine 4. Positions 113 and 163 each coordinate substrate. Lysine 165 (proton acceptor) is an active-site residue. Lysine 167 serves as a coordination point for substrate. Residues lysine 191, aspartate 193, and glutamate 194 each coordinate Mg(2+). An N6-carboxylysine modification is found at lysine 191. Histidine 284 serves as the catalytic Proton acceptor. Substrate-binding residues include arginine 285, histidine 317, and serine 369.

The protein belongs to the RuBisCO large chain family. Type I subfamily. Heterohexadecamer of 8 large chains and 8 small chains; disulfide-linked. The disulfide link is formed within the large subunit homodimers. Mg(2+) is required as a cofactor. In terms of processing, the disulfide bond which can form in the large chain dimeric partners within the hexadecamer appears to be associated with oxidative stress and protein turnover.

It localises to the plastid. The protein localises to the chloroplast. It carries out the reaction 2 (2R)-3-phosphoglycerate + 2 H(+) = D-ribulose 1,5-bisphosphate + CO2 + H2O. The catalysed reaction is D-ribulose 1,5-bisphosphate + O2 = 2-phosphoglycolate + (2R)-3-phosphoglycerate + 2 H(+). Its function is as follows. RuBisCO catalyzes two reactions: the carboxylation of D-ribulose 1,5-bisphosphate, the primary event in carbon dioxide fixation, as well as the oxidative fragmentation of the pentose substrate in the photorespiration process. Both reactions occur simultaneously and in competition at the same active site. The polypeptide is Ribulose bisphosphate carboxylase large chain (Cephalotus follicularis (Albany pitcher plant)).